Here is a 305-residue protein sequence, read N- to C-terminus: Protoheme IX farnesyltransferase (305 aa).

The next 9 membrane-spanning stretches (helical) occupy residues 31–51 (VMSLVIFTGFVGMWLAPYSVH), 52–72 (PFIAGIAVVCIALGAGSAGAI), 96–118 (VIESDEALSFGLITGFFAVFFMA), 123–145 (LLASFLLLFTIFYYICIYTIWLK), 151–171 (NIVIGGVSGALPPVIGYAAVS), 179–199 (IILFLIIFIWTPPHSWALALF), 225–245 (ILIYSILLFIVSLMPFFIGMN), 247–267 (FIYLIISGILGVVFLYYAGSL), and 281–301 (FAYSIFYLFFIFLLLYSTNTI).

The protein belongs to the UbiA prenyltransferase family. Protoheme IX farnesyltransferase subfamily.

It localises to the cell inner membrane. It catalyses the reaction heme b + (2E,6E)-farnesyl diphosphate + H2O = Fe(II)-heme o + diphosphate. It participates in porphyrin-containing compound metabolism; heme O biosynthesis; heme O from protoheme: step 1/1. In terms of biological role, converts heme B (protoheme IX) to heme O by substitution of the vinyl group on carbon 2 of heme B porphyrin ring with a hydroxyethyl farnesyl side group. In Rickettsia rickettsii (strain Iowa), this protein is Protoheme IX farnesyltransferase.